The sequence spans 218 residues: Protein-methionine-sulfoxide reductase heme-binding subunit MsrQ (218 aa).

The next 5 membrane-spanning stretches (helical) occupy residues 14–34 (LVHA…WQVW), 60–80 (FLLI…AVVI), 86–106 (LGLY…TLDL), 121–141 (PYIT…ITST), and 155–175 (LHTL…WLVK).

It belongs to the MsrQ family. As to quaternary structure, heterodimer of a catalytic subunit (MsrP) and a heme-binding subunit (MsrQ). The cofactor is FMN. It depends on heme b as a cofactor.

It localises to the cell inner membrane. Its function is as follows. Part of the MsrPQ system that repairs oxidized periplasmic proteins containing methionine sulfoxide residues (Met-O), using respiratory chain electrons. Thus protects these proteins from oxidative-stress damage caused by reactive species of oxygen and chlorine generated by the host defense mechanisms. MsrPQ is essential for the maintenance of envelope integrity under bleach stress, rescuing a wide series of structurally unrelated periplasmic proteins from methionine oxidation. MsrQ provides electrons for reduction to the reductase catalytic subunit MsrP, using the quinone pool of the respiratory chain. In Xanthomonas euvesicatoria pv. vesicatoria (strain 85-10) (Xanthomonas campestris pv. vesicatoria), this protein is Protein-methionine-sulfoxide reductase heme-binding subunit MsrQ.